The primary structure comprises 605 residues: Poly(3-hydroxyalkanoate) polymerase (605 aa).

One can recognise an AB hydrolase-1 domain in the interval 319–527; the sequence is IETAIDMIGV…VLAGSGHIAG (209 aa). The active site involves cysteine 341.

It belongs to the PHA/PHB synthase family.

The protein localises to the cytoplasm. In Methylorubrum extorquens (Methylobacterium dichloromethanicum), this protein is Poly(3-hydroxyalkanoate) polymerase (phaC).